A 513-amino-acid chain; its full sequence is GMP synthase [glutamine-hydrolyzing] (513 aa).

The Glutamine amidotransferase type-1 domain occupies 8–198 (KIIVLDYGSQ…ALNTCGAKGN (191 aa)). The active-site Nucleophile is the Cys-85. Active-site residues include His-172 and Glu-174. In terms of domain architecture, GMPS ATP-PPase spans 199-388 (WSMENFIDMQ…LGMPDEIVWR (190 aa)). 226 to 232 (SGGVDSS) is an ATP binding site.

As to quaternary structure, homodimer.

It carries out the reaction XMP + L-glutamine + ATP + H2O = GMP + L-glutamate + AMP + diphosphate + 2 H(+). It functions in the pathway purine metabolism; GMP biosynthesis; GMP from XMP (L-Gln route): step 1/1. Its function is as follows. Catalyzes the synthesis of GMP from XMP. The sequence is that of GMP synthase [glutamine-hydrolyzing] from Lactococcus lactis subsp. cremoris (strain SK11).